The primary structure comprises 331 residues: Glycerol-3-phosphate dehydrogenase [NAD(P)+] (331 aa).

NADPH contacts are provided by W13, R33, and K103. Residues K103, G131, and T133 each coordinate sn-glycerol 3-phosphate. An NADPH-binding site is contributed by A135. Sn-glycerol 3-phosphate contacts are provided by K187, D240, S250, R251, and N252. K187 functions as the Proton acceptor in the catalytic mechanism. R251 contributes to the NADPH binding site. NADPH is bound by residues V275 and E277.

It belongs to the NAD-dependent glycerol-3-phosphate dehydrogenase family.

The protein localises to the cytoplasm. It carries out the reaction sn-glycerol 3-phosphate + NAD(+) = dihydroxyacetone phosphate + NADH + H(+). The catalysed reaction is sn-glycerol 3-phosphate + NADP(+) = dihydroxyacetone phosphate + NADPH + H(+). It participates in membrane lipid metabolism; glycerophospholipid metabolism. Functionally, catalyzes the reduction of the glycolytic intermediate dihydroxyacetone phosphate (DHAP) to sn-glycerol 3-phosphate (G3P), the key precursor for phospholipid synthesis. The protein is Glycerol-3-phosphate dehydrogenase [NAD(P)+] of Novosphingobium aromaticivorans (strain ATCC 700278 / DSM 12444 / CCUG 56034 / CIP 105152 / NBRC 16084 / F199).